The sequence spans 267 residues: Tryptophan synthase alpha chain (267 aa).

Residues Glu-51 and Asp-62 each act as proton acceptor in the active site.

The protein belongs to the TrpA family. Tetramer of two alpha and two beta chains.

The catalysed reaction is (1S,2R)-1-C-(indol-3-yl)glycerol 3-phosphate + L-serine = D-glyceraldehyde 3-phosphate + L-tryptophan + H2O. Its pathway is amino-acid biosynthesis; L-tryptophan biosynthesis; L-tryptophan from chorismate: step 5/5. The alpha subunit is responsible for the aldol cleavage of indoleglycerol phosphate to indole and glyceraldehyde 3-phosphate. The protein is Tryptophan synthase alpha chain of Prochlorococcus marinus (strain SARG / CCMP1375 / SS120).